The sequence spans 510 residues: MCGILGIALADQSSVVAPELFDGSLFLQHRGQDAAGMATCGERGRLYQCKGNGMARDVFTQHRMSGLVGSMGIAHLRYPTAGSCANSEAQPFYVNSPYGICLSHNGTLVNTLSLRSYLDEVVHRHINTDSDSELLLNVFAAELERHNKYRVNNDDIFHALEGVYRQCRGGYACVGMLAGYSLFGFRDPNGIRPLLFGERVNPDGTKDYMLASESVVLKAHNFNKFRDLKPGEAVIIPKDCNKQEPEFRQVVPTNSYRPDLFEYVYFARPDSVLDGISVYHTRLQMGIKLAENVKKVVDPDEIDVVVSVPDTARTCALQCANHLNKPYREAFVKNRYVGRTFIMPNQKERVSSVRRKLNPMDFEFKDKRVLIVDDSIVRGTTSKEIINMAKESGATKVYFASAAPAIRFNHIYGIDLADTKQLVAYNRTTDEVAQELGCEKVIYQSLEDLVDCCKTDKIDKFEVGVFTGNYVTGVEDGYLQELERVRALNKAKLTTAKAEVDIGLYNSADY.

Residue cysteine 2 is the Nucleophile of the active site. The Glutamine amidotransferase type-2 domain occupies 2–239; that stretch reads CGILGIALAD…PGEAVIIPKD (238 aa). The Mg(2+) site is built by aspartate 373 and aspartate 374.

It in the C-terminal section; belongs to the purine/pyrimidine phosphoribosyltransferase family. Mg(2+) serves as cofactor.

It catalyses the reaction 5-phospho-beta-D-ribosylamine + L-glutamate + diphosphate = 5-phospho-alpha-D-ribose 1-diphosphate + L-glutamine + H2O. It functions in the pathway purine metabolism; IMP biosynthesis via de novo pathway; N(1)-(5-phospho-D-ribosyl)glycinamide from 5-phospho-alpha-D-ribose 1-diphosphate: step 1/2. The protein is Amidophosphoribosyltransferase (ADE4) of Lachancea kluyveri (Yeast).